The chain runs to 303 residues: Pseudouridine-5'-phosphate glycosidase (303 aa).

Residue glutamate 23 is the Proton donor of the active site. Substrate contacts are provided by lysine 85 and valine 105. Position 137 (aspartate 137) interacts with Mn(2+). A substrate-binding site is contributed by 139–141; the sequence is SQD. The active-site Nucleophile is lysine 158.

The protein belongs to the pseudouridine-5'-phosphate glycosidase family. In terms of assembly, homotrimer. Requires Mn(2+) as cofactor.

It carries out the reaction D-ribose 5-phosphate + uracil = psi-UMP + H2O. In terms of biological role, catalyzes the reversible cleavage of pseudouridine 5'-phosphate (PsiMP) to ribose 5-phosphate and uracil. Functions biologically in the cleavage direction, as part of a pseudouridine degradation pathway. This chain is Pseudouridine-5'-phosphate glycosidase, found in Myxococcus xanthus (strain DK1622).